Here is a 196-residue protein sequence, read N- to C-terminus: SAGA-associated factor 11 homolog (196 aa).

Residues 102-123 (CTCPNCDRLVAAARFAPHLEKC) form an SGF11-type zinc finger. Residues 140-196 (TKEGTSASSNSSYVHSGANAGGTDDEDDVDWSSDKRKKKSTQNSRNNGSKKNNGKTF) are disordered. Polar residues predominate over residues 142–153 (EGTSASSNSSYV). S172 carries the post-translational modification Phosphoserine. Positions 182 to 196 (NSRNNGSKKNNGKTF) are enriched in low complexity.

Belongs to the SGF11 family. Component of some SAGA transcription coactivator-HAT complexes, at least composed of Ada2b, not/nonstop, Pcaf/Gcn5, Sgf11 and Spt3. Within the SAGA complex, Sgf11, e(y)2, and not/nonstop form an additional subcomplex of SAGA called the DUB module (deubiquitination module). Interacts directly with not/nonstop. Interacts with the AMEX complex component xmas-2. Interacts with Cbp80; important for promoter recruitment of Sgf11 that is not associated with the DUB module.

The protein localises to the nucleus. Its subcellular location is the nucleoplasm. It localises to the cytoplasm. In terms of biological role, component of the transcription regulatory histone acetylation (HAT) complex SAGA, a multiprotein complex that activates transcription by remodeling chromatin and mediating histone acetylation and deubiquitination. Within the SAGA complex, participates in a subcomplex that specifically deubiquitinates histone H2B. The SAGA complex is recruited to specific gene promoters by activators, where it is required for transcription. Required for nuclear receptor-mediated transactivation. Binds independently on SAGA to promoters in an RNA-dependent manner. Binds to mRNA and is essential for total mRNA export from the nucleus. Required to counteract heterochromatin silencing. Controls the development of neuronal connectivity in visual system by being required for accurate axon targeting in the optic lobe. Required for expression of ecdysone-induced genes such as br/broad. The protein is SAGA-associated factor 11 homolog of Drosophila persimilis (Fruit fly).